The following is a 219-amino-acid chain: Glycosylphosphatidylinositol anchor biosynthesis protein 11 (219 aa).

The Cytoplasmic segment spans residues 1 to 45 (MPAKKRTRKTVKKTVSFSDDTTLTTHQNREKKNVDHDRPPVYVRK). S16 is subject to Phosphoserine. Residues 46–66 (TPLMTFPYHLVALLYYYVFVS) form a helical membrane-spanning segment. A topological domain (lumenal) is located at residue S67. The chain crosses the membrane as a helical span at residues 68-88 (NFNTVKLLSFLIPTQVAYLVL). At 89 to 108 (QFNKCTVYGNKIIKINYSLT) the chain is on the cytoplasmic side. Residues 109-129 (IICLGVTFLLSFPTMLLTILF) form a helical membrane-spanning segment. The Lumenal portion of the chain corresponds to 130 to 135 (GAPLMD). A helical membrane pass occupies residues 136–156 (LLWETWLLSLHFAFLAYPAVY). The Cytoplasmic portion of the chain corresponds to 157 to 170 (SVFNCDFKVGLWKK). Residues 171-191 (YFIFIVVGGWISCVVIPLDWD) form a helical membrane-spanning segment. The Lumenal segment spans residues 192–198 (RDWQNWP). A helical membrane pass occupies residues 199–217 (IPIVVGGYLGALVGYTIGA). Over 218 to 219 (YI) the chain is Cytoplasmic.

It belongs to the PIGF family.

The protein localises to the endoplasmic reticulum membrane. It participates in glycolipid biosynthesis; glycosylphosphatidylinositol-anchor biosynthesis. Its function is as follows. Acts in the GPI biosynthetic pathway between GlcNAc-PI synthesis and GPI transfer to protein. Required for the formation of complete GPI precursors CP1 and CP2. This is Glycosylphosphatidylinositol anchor biosynthesis protein 11 (GPI11) from Saccharomyces cerevisiae (strain ATCC 204508 / S288c) (Baker's yeast).